Here is a 426-residue protein sequence, read N- to C-terminus: Mannose-6-phosphate isomerase (426 aa).

Residues Gln112, His114, Glu139, and His277 each coordinate Zn(2+). Arg296 is a catalytic residue.

This sequence belongs to the mannose-6-phosphate isomerase type 1 family. Requires Zn(2+) as cofactor.

The protein resides in the cytoplasm. The enzyme catalyses D-mannose 6-phosphate = D-fructose 6-phosphate. Its pathway is nucleotide-sugar biosynthesis; GDP-alpha-D-mannose biosynthesis; alpha-D-mannose 1-phosphate from D-fructose 6-phosphate: step 1/2. Involved in the synthesis of the GDP-mannose and dolichol-phosphate-mannose required for a number of critical mannosyl transfer reactions. This chain is Mannose-6-phosphate isomerase (PMI40), found in Ogataea parapolymorpha (strain ATCC 26012 / BCRC 20466 / JCM 22074 / NRRL Y-7560 / DL-1) (Yeast).